Here is a 126-residue protein sequence, read N- to C-terminus: Aspartate 1-decarboxylase (126 aa).

Catalysis depends on serine 25, which acts as the Schiff-base intermediate with substrate; via pyruvic acid. Serine 25 is subject to Pyruvic acid (Ser). Position 57 (threonine 57) interacts with substrate. The active-site Proton donor is the tyrosine 58. Residue 73–75 (GAA) participates in substrate binding.

This sequence belongs to the PanD family. Heterooctamer of four alpha and four beta subunits. It depends on pyruvate as a cofactor. In terms of processing, is synthesized initially as an inactive proenzyme, which is activated by self-cleavage at a specific serine bond to produce a beta-subunit with a hydroxyl group at its C-terminus and an alpha-subunit with a pyruvoyl group at its N-terminus.

It localises to the cytoplasm. It carries out the reaction L-aspartate + H(+) = beta-alanine + CO2. The protein operates within cofactor biosynthesis; (R)-pantothenate biosynthesis; beta-alanine from L-aspartate: step 1/1. Its function is as follows. Catalyzes the pyruvoyl-dependent decarboxylation of aspartate to produce beta-alanine. The sequence is that of Aspartate 1-decarboxylase from Stutzerimonas stutzeri (strain A1501) (Pseudomonas stutzeri).